We begin with the raw amino-acid sequence, 327 residues long: GTPase Obg (327 aa).

The region spanning His2 to Ile160 is the Obg domain. Residues Ala161–Lys326 enclose the OBG-type G domain. Residues Gly167 to Ser174, Phe192 to Ile196, Asp213 to Gly216, Ser280 to Asp283, and Ser307 to Tyr309 each bind GTP. Ser174 and Thr194 together coordinate Mg(2+).

This sequence belongs to the TRAFAC class OBG-HflX-like GTPase superfamily. OBG GTPase family. As to quaternary structure, monomer. Requires Mg(2+) as cofactor.

It localises to the cytoplasm. In terms of biological role, an essential GTPase which binds GTP, GDP and possibly (p)ppGpp with moderate affinity, with high nucleotide exchange rates and a fairly low GTP hydrolysis rate. Plays a role in control of the cell cycle, stress response, ribosome biogenesis and in those bacteria that undergo differentiation, in morphogenesis control. This Borrelia recurrentis (strain A1) protein is GTPase Obg.